A 196-amino-acid polypeptide reads, in one-letter code: uncharacterized protein (196 aa).

This is an uncharacterized protein from Pasteurella multocida (strain Pm70).